The primary structure comprises 173 residues: Ribosome maturation factor RimM (173 aa).

The region spanning 97–171 (EGEFFYHEII…QITIEPMEGL (75 aa)) is the PRC barrel domain.

Belongs to the RimM family. In terms of assembly, binds ribosomal protein uS19.

The protein resides in the cytoplasm. Its function is as follows. An accessory protein needed during the final step in the assembly of 30S ribosomal subunit, possibly for assembly of the head region. Essential for efficient processing of 16S rRNA. May be needed both before and after RbfA during the maturation of 16S rRNA. It has affinity for free ribosomal 30S subunits but not for 70S ribosomes. The protein is Ribosome maturation factor RimM of Halalkalibacterium halodurans (strain ATCC BAA-125 / DSM 18197 / FERM 7344 / JCM 9153 / C-125) (Bacillus halodurans).